A 473-amino-acid chain; its full sequence is Siroheme synthase (473 aa).

A precorrin-2 dehydrogenase /sirohydrochlorin ferrochelatase region spans residues 1–203 (MNYLPIFIDL…GNKEQAINVL (203 aa)). NAD(+) contacts are provided by residues 22 to 23 (EV) and 43 to 44 (KE). Ser128 is subject to Phosphoserine. The segment at 215-473 (GEIILVGAGP…KNKFSTLTFI (259 aa)) is uroporphyrinogen-III C-methyltransferase. Pro224 contacts S-adenosyl-L-methionine. Asp247 serves as the catalytic Proton acceptor. The Proton donor role is filled by Lys269. Residues 300 to 302 (GGD), Ile305, Met382, and Gly411 each bind S-adenosyl-L-methionine.

In the N-terminal section; belongs to the precorrin-2 dehydrogenase / sirohydrochlorin ferrochelatase family. This sequence in the C-terminal section; belongs to the precorrin methyltransferase family.

It carries out the reaction uroporphyrinogen III + 2 S-adenosyl-L-methionine = precorrin-2 + 2 S-adenosyl-L-homocysteine + H(+). The catalysed reaction is precorrin-2 + NAD(+) = sirohydrochlorin + NADH + 2 H(+). It catalyses the reaction siroheme + 2 H(+) = sirohydrochlorin + Fe(2+). Its pathway is cofactor biosynthesis; adenosylcobalamin biosynthesis; precorrin-2 from uroporphyrinogen III: step 1/1. It functions in the pathway cofactor biosynthesis; adenosylcobalamin biosynthesis; sirohydrochlorin from precorrin-2: step 1/1. It participates in porphyrin-containing compound metabolism; siroheme biosynthesis; precorrin-2 from uroporphyrinogen III: step 1/1. The protein operates within porphyrin-containing compound metabolism; siroheme biosynthesis; siroheme from sirohydrochlorin: step 1/1. Its pathway is porphyrin-containing compound metabolism; siroheme biosynthesis; sirohydrochlorin from precorrin-2: step 1/1. In terms of biological role, multifunctional enzyme that catalyzes the SAM-dependent methylations of uroporphyrinogen III at position C-2 and C-7 to form precorrin-2 via precorrin-1. Then it catalyzes the NAD-dependent ring dehydrogenation of precorrin-2 to yield sirohydrochlorin. Finally, it catalyzes the ferrochelation of sirohydrochlorin to yield siroheme. The sequence is that of Siroheme synthase from Buchnera aphidicola subsp. Acyrthosiphon pisum (strain APS) (Acyrthosiphon pisum symbiotic bacterium).